Here is a 170-residue protein sequence, read N- to C-terminus: Small ribosomal subunit protein uS13 (170 aa).

A compositionally biased stretch (basic residues) spans 128 to 140 (VRHKRGQKVRGQR). The tract at residues 128–170 (VRHKRGQKVRGQRTKSTGRTEGTIGVNVEAIKEEQAEDGGDEE) is disordered.

This sequence belongs to the universal ribosomal protein uS13 family. In terms of assembly, part of the 30S ribosomal subunit. Forms a loose heterodimer with protein S19. Forms two bridges to the 50S subunit in the 70S ribosome.

Located at the top of the head of the 30S subunit, it contacts several helices of the 16S rRNA. In the 70S ribosome it contacts the 23S rRNA (bridge B1a) and protein L5 of the 50S subunit (bridge B1b), connecting the 2 subunits; these bridges are implicated in subunit movement. The sequence is that of Small ribosomal subunit protein uS13 from Natronomonas pharaonis (strain ATCC 35678 / DSM 2160 / CIP 103997 / JCM 8858 / NBRC 14720 / NCIMB 2260 / Gabara) (Halobacterium pharaonis).